Consider the following 62-residue polypeptide: MQKEQEAQEIAKKAVKIVFFLGLVVVLLMMINLYMLINQINASAQMSHQIKKIEERLNQEQK.

A helical transmembrane segment spans residues 17 to 37 (IVFFLGLVVVLLMMINLYMLI).

The protein resides in the membrane. This is an uncharacterized protein from Helicobacter pylori (strain J99 / ATCC 700824) (Campylobacter pylori J99).